We begin with the raw amino-acid sequence, 153 residues long: Interleukin-4 (153 aa).

An N-terminal signal peptide occupies residues 1 to 24; the sequence is MGLTSQLLPPLFFLLACAGNFAHG. 3 cysteine pairs are disulfide-bonded: cysteine 27-cysteine 151, cysteine 48-cysteine 89, and cysteine 70-cysteine 123. Asparagine 62 carries N-linked (GlcNAc...) asparagine glycosylation. Asparagine 129 is a glycosylation site (N-linked (GlcNAc...) asparagine).

Belongs to the IL-4/IL-13 family.

Its subcellular location is the secreted. In terms of biological role, participates in at least several B-cell activation processes as well as of other cell types. It is a costimulator of DNA-synthesis. It induces the expression of class II MHC molecules on resting B-cells. It enhances both secretion and cell surface expression of IgE and IgG1. It also regulates the expression of the low affinity Fc receptor for IgE (CD23) on both lymphocytes and monocytes. Positively regulates IL31RA expression in macrophages. Stimulates autophagy in dendritic cells by interfering with mTORC1 signaling and through the induction of RUFY4. The polypeptide is Interleukin-4 (IL4) (Macaca mulatta (Rhesus macaque)).